Here is a 367-residue protein sequence, read N- to C-terminus: MAIKTENFILNIGPQHPSTHGVFRLRIVLDGEVITDLEPVFGYLHRGIEKLAEGRTYLQDIPFTDRLDYLGSMTNNHAYVMAVEKLAGITVPERAEYIRVILDELQRIASHLAGLGFFLNDLGALQTPLLYMFREREKIVELFDMCSGQRLNYNYYRFGGFVQDLPEEFLPALKILLDTLPGFIDEYEQLISTNEIVLIRTKGVGVLKRDLAINSSAAGPVLRASGINWDIRRNDPYSIYNRFEFDIPIAKNGDTYDRYMIRILEMRQSVRILRQAVKDLPEGEIMGKAPKLLKPPAGEVYSRIEGPKGELGFYLVSDGTDKPYRWRVRPPCLLNLSALKDMVVGWKVADLMAIFGSIDIVMGEVDR.

This sequence belongs to the complex I 49 kDa subunit family. In terms of assembly, NDH-1 is composed of 14 different subunits. Subunits NuoB, C, D, E, F, and G constitute the peripheral sector of the complex.

It localises to the cell membrane. It carries out the reaction a quinone + NADH + 5 H(+)(in) = a quinol + NAD(+) + 4 H(+)(out). Its function is as follows. NDH-1 shuttles electrons from NADH, via FMN and iron-sulfur (Fe-S) centers, to quinones in the respiratory chain. The immediate electron acceptor for the enzyme in this species is believed to be ubiquinone. Couples the redox reaction to proton translocation (for every two electrons transferred, four hydrogen ions are translocated across the cytoplasmic membrane), and thus conserves the redox energy in a proton gradient. This is NADH-quinone oxidoreductase subunit D from Dehalococcoides mccartyi (strain ATCC BAA-2100 / JCM 16839 / KCTC 5957 / BAV1).